The chain runs to 163 residues: Crossover junction endodeoxyribonuclease RuvC (163 aa).

Active-site residues include aspartate 9, glutamate 76, and aspartate 148. Mg(2+) is bound by residues aspartate 9, glutamate 76, and aspartate 148.

Belongs to the RuvC family. In terms of assembly, homodimer which binds Holliday junction (HJ) DNA. The HJ becomes 2-fold symmetrical on binding to RuvC with unstacked arms; it has a different conformation from HJ DNA in complex with RuvA. In the full resolvosome a probable DNA-RuvA(4)-RuvB(12)-RuvC(2) complex forms which resolves the HJ. It depends on Mg(2+) as a cofactor.

Its subcellular location is the cytoplasm. It catalyses the reaction Endonucleolytic cleavage at a junction such as a reciprocal single-stranded crossover between two homologous DNA duplexes (Holliday junction).. Its function is as follows. The RuvA-RuvB-RuvC complex processes Holliday junction (HJ) DNA during genetic recombination and DNA repair. Endonuclease that resolves HJ intermediates. Cleaves cruciform DNA by making single-stranded nicks across the HJ at symmetrical positions within the homologous arms, yielding a 5'-phosphate and a 3'-hydroxyl group; requires a central core of homology in the junction. The consensus cleavage sequence is 5'-(A/T)TT(C/G)-3'. Cleavage occurs on the 3'-side of the TT dinucleotide at the point of strand exchange. HJ branch migration catalyzed by RuvA-RuvB allows RuvC to scan DNA until it finds its consensus sequence, where it cleaves and resolves the cruciform DNA. The protein is Crossover junction endodeoxyribonuclease RuvC of Nostoc sp. (strain PCC 7120 / SAG 25.82 / UTEX 2576).